Consider the following 328-residue polypeptide: MKMHVCFSVILMFLSIFFINGALSKLERLKHPVKKKSDGSLSFLVIGDWGRKGGFNQSLVAHQMGVVGEKLDIDFVISVGDNFYDDGLKGVNDPSFEASFSHIYTHPSLQKQWYSVLGNHDYRGNVEAQLSKVLTQKDWRWFCRRSFVLSSGMVDFFFADTNPFVEKYFTEPEDHTYDWRNVLPRNKYISNLLHDLDLEIKKSRATWKFVVGHHGIKTAGNHGVTQELVDQLLPILEENKVDLYINGHDHCLQHIGSHGKTQFLTSGGGSKAWRGHVQPWDPKELKLYYDGQGFMSLHITHSKAKFIYYDVSGNVLHRSSLSKRSAHL.

An N-terminal signal peptide occupies residues 1–24 (MKMHVCFSVILMFLSIFFINGALS). Residue aspartate 48 coordinates Fe cation. Asparagine 56 carries N-linked (GlcNAc...) asparagine glycosylation. Fe cation contacts are provided by aspartate 81 and tyrosine 84. A Zn(2+)-binding site is contributed by aspartate 81. Positions 119 and 213 each coordinate Zn(2+). Residue histidine 222 is the Proton donor of the active site. A Zn(2+)-binding site is contributed by histidine 248. A substrate-binding site is contributed by 248 to 250 (HDH). Residue histidine 250 participates in Fe cation binding.

It belongs to the metallophosphoesterase superfamily. Purple acid phosphatase family. In terms of assembly, homodimer. The cofactor is Fe cation. Zn(2+) serves as cofactor. Expressed in roots, stems, leaves, flowers and siliques.

Its subcellular location is the secreted. It carries out the reaction a phosphate monoester + H2O = an alcohol + phosphate. In Arabidopsis thaliana (Mouse-ear cress), this protein is Purple acid phosphatase 7 (PAP7).